A 650-amino-acid polypeptide reads, in one-letter code: MTKTTKKFETEVQQLLDLVIHSLYSNKDIFLRELISNSSDAIDKVLFEAHQNAAVIEGEPEGKIKLIPDKEAGTITIRDNGVGMTMEEVEKNIGTIAHSGTKAFLANLKEQNVSEHPELIGQFGVGFYASFMVADRVTLVTRRAGQDKAAGVRWESTGDGTYTVEEAVKETRGTEITLHLKEEMKEYLDEWKIRSIVRKYSDYVQYPVVMDVTRTEVPKGVNGEEIEGAGTIEKTVEETLNSMKAIWARAKSEVTEEEYEEFYKHVSHDFEKPLKTIHYSAEGVSEFKALLYLPAHKPFDLFMPERKKGVQLYVRRVFITDSCEQLIPDYLRFVKGVVDSSDLPLNVSREILQEDVQIKRIQKSLVSKIISTLSEMREKEADDYLAFYKEFGQVLKEGVHFDYANREKLQDLLLFESTRTEAGKFTSLKEYVERMPAGQEEIYFITGTSRTALEQSPHLEIFRKKEYEVLFLTDPVDEWVVQGVTEYDGKKLKAVDRGDVIPATEEEKKEQEAKREEAFKQYGDLLSFVKEKLDARVKEVRLSSRLTDSACCLVADEHGLNANMERILRAMNQDVPESKRILELNPDHPLMQVMANLFARDKANPRLGDYCDLLYDQALLTEGSPISDPLRFTRLVAELMVADGKAAAGE.

Residues 1–349 (MTKTTKKFET…SSDLPLNVSR (349 aa)) are a; substrate-binding. Residues 350–566 (EILQEDVQIK…EHGLNANMER (217 aa)) are b. The interval 567-650 (ILRAMNQDVP…VADGKAAAGE (84 aa)) is c.

This sequence belongs to the heat shock protein 90 family. In terms of assembly, homodimer.

The protein resides in the cytoplasm. Functionally, molecular chaperone. Has ATPase activity. This chain is Chaperone protein HtpG, found in Geobacter metallireducens (strain ATCC 53774 / DSM 7210 / GS-15).